A 401-amino-acid chain; its full sequence is tRNA(Met) cytidine acetate ligase (401 aa).

ATP-binding positions include 7-20, glycine 101, asparagine 160, and 185-186; these read VVEY…HLYH and RI.

This sequence belongs to the TmcAL family.

It is found in the cytoplasm. The enzyme catalyses cytidine(34) in elongator tRNA(Met) + acetate + ATP = N(4)-acetylcytidine(34) in elongator tRNA(Met) + AMP + diphosphate. Catalyzes the formation of N(4)-acetylcytidine (ac(4)C) at the wobble position of elongator tRNA(Met), using acetate and ATP as substrates. First activates an acetate ion to form acetyladenylate (Ac-AMP) and then transfers the acetyl group to tRNA to form ac(4)C34. The polypeptide is tRNA(Met) cytidine acetate ligase (Anoxybacillus flavithermus (strain DSM 21510 / WK1)).